The chain runs to 128 residues: Phosphoribosyl-AMP cyclohydrolase (128 aa).

Aspartate 77 serves as a coordination point for Mg(2+). Cysteine 78 lines the Zn(2+) pocket. Residues aspartate 79 and aspartate 81 each contribute to the Mg(2+) site. Zn(2+)-binding residues include cysteine 94 and cysteine 101.

This sequence belongs to the PRA-CH family. As to quaternary structure, homodimer. It depends on Mg(2+) as a cofactor. Zn(2+) is required as a cofactor.

The protein localises to the cytoplasm. It carries out the reaction 1-(5-phospho-beta-D-ribosyl)-5'-AMP + H2O = 1-(5-phospho-beta-D-ribosyl)-5-[(5-phospho-beta-D-ribosylamino)methylideneamino]imidazole-4-carboxamide. The protein operates within amino-acid biosynthesis; L-histidine biosynthesis; L-histidine from 5-phospho-alpha-D-ribose 1-diphosphate: step 3/9. Its function is as follows. Catalyzes the hydrolysis of the adenine ring of phosphoribosyl-AMP. This is Phosphoribosyl-AMP cyclohydrolase from Granulibacter bethesdensis (strain ATCC BAA-1260 / CGDNIH1).